A 97-amino-acid chain; its full sequence is Aspartyl/glutamyl-tRNA(Asn/Gln) amidotransferase subunit C (97 aa).

It belongs to the GatC family. As to quaternary structure, heterotrimer of A, B and C subunits.

It catalyses the reaction L-glutamyl-tRNA(Gln) + L-glutamine + ATP + H2O = L-glutaminyl-tRNA(Gln) + L-glutamate + ADP + phosphate + H(+). The enzyme catalyses L-aspartyl-tRNA(Asn) + L-glutamine + ATP + H2O = L-asparaginyl-tRNA(Asn) + L-glutamate + ADP + phosphate + 2 H(+). Allows the formation of correctly charged Asn-tRNA(Asn) or Gln-tRNA(Gln) through the transamidation of misacylated Asp-tRNA(Asn) or Glu-tRNA(Gln) in organisms which lack either or both of asparaginyl-tRNA or glutaminyl-tRNA synthetases. The reaction takes place in the presence of glutamine and ATP through an activated phospho-Asp-tRNA(Asn) or phospho-Glu-tRNA(Gln). This is Aspartyl/glutamyl-tRNA(Asn/Gln) amidotransferase subunit C from Parasynechococcus marenigrum (strain WH8102).